Consider the following 302-residue polypeptide: uncharacterized protein (302 aa).

This is an uncharacterized protein from Schizosaccharomyces pombe (strain 972 / ATCC 24843) (Fission yeast).